Reading from the N-terminus, the 200-residue chain is Holliday junction branch migration complex subunit RuvA (200 aa).

Residues 1–65 are domain I; that stretch reads MYEYIKGTLT…ETEHVLYGFS (65 aa). The segment at 66–144 is domain II; sequence SRAEKECFRL…TLMPLYLEEP (79 aa). A flexible linker region spans residues 145 to 149; the sequence is VVPSS. The interval 150 to 200 is domain III; that stretch reads TANSSFKEGIGALMNLGFSRLAADRMMTEAVKELSEEASVAELLPIALRKS.

This sequence belongs to the RuvA family. Homotetramer. Forms an RuvA(8)-RuvB(12)-Holliday junction (HJ) complex. HJ DNA is sandwiched between 2 RuvA tetramers; dsDNA enters through RuvA and exits via RuvB. An RuvB hexamer assembles on each DNA strand where it exits the tetramer. Each RuvB hexamer is contacted by two RuvA subunits (via domain III) on 2 adjacent RuvB subunits; this complex drives branch migration. In the full resolvosome a probable DNA-RuvA(4)-RuvB(12)-RuvC(2) complex forms which resolves the HJ.

It is found in the cytoplasm. Functionally, the RuvA-RuvB-RuvC complex processes Holliday junction (HJ) DNA during genetic recombination and DNA repair, while the RuvA-RuvB complex plays an important role in the rescue of blocked DNA replication forks via replication fork reversal (RFR). RuvA specifically binds to HJ cruciform DNA, conferring on it an open structure. The RuvB hexamer acts as an ATP-dependent pump, pulling dsDNA into and through the RuvAB complex. HJ branch migration allows RuvC to scan DNA until it finds its consensus sequence, where it cleaves and resolves the cruciform DNA. This Chlamydia trachomatis serovar A (strain ATCC VR-571B / DSM 19440 / HAR-13) protein is Holliday junction branch migration complex subunit RuvA.